The primary structure comprises 197 residues: 3-isopropylmalate dehydratase small subunit (197 aa).

This sequence belongs to the LeuD family. LeuD type 1 subfamily. As to quaternary structure, heterodimer of LeuC and LeuD.

It carries out the reaction (2R,3S)-3-isopropylmalate = (2S)-2-isopropylmalate. The protein operates within amino-acid biosynthesis; L-leucine biosynthesis; L-leucine from 3-methyl-2-oxobutanoate: step 2/4. Catalyzes the isomerization between 2-isopropylmalate and 3-isopropylmalate, via the formation of 2-isopropylmaleate. The sequence is that of 3-isopropylmalate dehydratase small subunit from Geobacillus kaustophilus (strain HTA426).